Consider the following 337-residue polypeptide: Putative carbonic anhydrase-like protein 2 (337 aa).

The signal sequence occupies residues 1–16 (MIPWLLTACIYPCVIG). An Alpha-carbonic anhydrase domain is found at 17 to 274 (PDFWGLLHGD…LNGRLVRTNI (258 aa)). Residue Y140 is part of the active site. N188 is a glycosylation site (N-linked (GlcNAc...) asparagine). Position 212–213 (212–213 (TF)) interacts with substrate.

This sequence belongs to the alpha-carbonic anhydrase family.

It is found in the secreted. The polypeptide is Putative carbonic anhydrase-like protein 2 (cah-2) (Caenorhabditis elegans).